The sequence spans 733 residues: MAGGRETCLPLIGFILICLKMVASAKSAPEIPTIDQAYSKLSNSITVEWATVPGATSYLLTAEDGDTVIETTVANSPGTVTGLKAATWYEITIRSISAAGRSQASPPKQAKTVLAAPILEVSSPSSDSILVQWEAVYMAIAFSVSIMRANGLGSIWKENTTNTSLTFTSLEAGTLYTIKAYAWNANRIPGDDSTCNQRTSPRAPANIQVSFDSGALKASFSWARAEGAFNYTVMALSDSSELTCSTTFSSCTISSLQCGTEYLISVLASNDAGSSKSSSAMTLKTVACAPGRVTIQEDPPGHLSVAWSSVDLGDYYVVFVKSDDGLEVHCNTSLTQCNFLSECGFTYFISVFVYNKAGQSPLGDIFNYTTAPCCPSDINPVLVSSDRVEIVWSPVRGAELYETKAVDGYNMVECNDTTPACTLSALECDTKYNITVYSFNEVRGSNMSCTPQFITTAPCSPEIKNVSRDAFSMINVHWRSTNDDATYTVTAQGEKGLYQCSSTGESCTMRGLPCGSVFSVTAVAETQAGRSLPSYSVPLETVPCCPTGLTVTQITQSVINVSWTIGRVAQTHVAVLESHTGQSKCHTHQNHCLLGCITCGINYTVTLKAISATGLTADCSYQSYFSGACCPLGVKLYRLGPNGIRIYWQASRGSANYSTDLYGSKGIFTCTPSAGLSFCDVTEIPCGDVYTVMVSPVAKTGLKLTFCPKKIYSVTCSGSTLGMVIYRGKRNEE.

The signal sequence occupies residues methionine 1–alanine 25. Fibronectin type-III domains are found at residues alanine 28–alanine 115, alanine 116–arginine 202, alanine 203–cysteine 288, alanine 289–cysteine 373, cysteine 374–cysteine 459, serine 460–cysteine 544, cysteine 545–leucine 632, and proline 631–threonine 715. The N-linked (GlcNAc...) asparagine glycan is linked to asparagine 230. The N-linked (GlcNAc...) asparagine glycan is linked to asparagine 433.

It is found in the secreted. The protein is Fibronectin type III domain-containing protein 7 (FNDC7) of Homo sapiens (Human).